Reading from the N-terminus, the 734-residue chain is Sulfate transporter (734 aa).

Positions 1–11 (MSLKNGEQNDL) are enriched in polar residues. Residues 1 to 38 (MSLKNGEQNDLSPKDSVKGNDQYRSPSGIHVEHEEESR) form a disordered region. S12 and S16 each carry phosphoserine. The next 2 helical transmembrane spans lie at 113–133 (MMSGLIVGILLVPQSIAYSLL) and 138–158 (PIYGLYTSFFASLIYFILGTS). N-linked (GlcNAc...) asparagine glycans are attached at residues N194 and N204. 8 consecutive transmembrane segments (helical) span residues 222-242 (FVAGVYQVAMGFFQVGFVSVY), 247-267 (LLGGFVTGASFTILTSQVKYL), 269-289 (GLSLPRSGGVGSLITTWIHIF), 292-312 (IHKTNICDLITSLLCLLVLLP), 379-399 (VDAIAIAIIGFAITVSLSEMF), 415-435 (AIGFCNIIPSFFHSFTTSAAL), 453-473 (VMTALVLLLVLLVIAPLFFSL), and 519-539 (LISTEIGLLTGVCFSMFCVIL). Residues 563 to 714 (AYKNLQAKSG…YSVYEAMTFA (152 aa)) form the STAS domain.

It belongs to the SLC26A/SulP transporter (TC 2.A.53) family. Post-translationally, N-glycosylated.

It localises to the cell membrane. It is found in the apical cell membrane. It carries out the reaction oxalate(in) + sulfate(out) = oxalate(out) + sulfate(in). The catalysed reaction is sulfate(out) + 2 chloride(in) = sulfate(in) + 2 chloride(out). It catalyses the reaction oxalate(out) + 2 chloride(in) = oxalate(in) + 2 chloride(out). The enzyme catalyses bromide(in) + chloride(out) = bromide(out) + chloride(in). It carries out the reaction nitrate(in) + chloride(out) = nitrate(out) + chloride(in). The catalysed reaction is iodide(in) + chloride(out) = iodide(out) + chloride(in). Functionally, sulfate transporter which mediates sulfate uptake into chondrocytes in order to maintain adequate sulfation of proteoglycans which is needed for cartilage development. Mediates electroneutral anion exchange of sulfate ions for oxalate ions, sulfate and oxalate ions for chloride and/or hydroxyl ions and chloride ions for bromide, iodide and nitrate ions. The coupling of sulfate transport to both hydroxyl and chloride ions likely serves to ensure transport at both acidic pH when most sulfate uptake is mediated by sulfate-hydroxide exchange and alkaline pH when most sulfate uptake is mediated by sulfate-chloride exchange. Essential for chondrocyte proliferation, differentiation and cell size expansion. This is Sulfate transporter (SLC26A2) from Ovis aries (Sheep).